Here is a 67-residue protein sequence, read N- to C-terminus: Probable cold shock protein A (67 aa).

Residues 1–66 enclose the CSD domain; the sequence is MPQGTVKWFN…KGPQATGVRT (66 aa). Residue K47 forms an Isoglutamyl lysine isopeptide (Lys-Gln) (interchain with Q-Cter in protein Pup) linkage.

The protein localises to the cytoplasm. The sequence is that of Probable cold shock protein A (cspA) from Mycolicibacterium smegmatis (strain ATCC 700084 / mc(2)155) (Mycobacterium smegmatis).